A 585-amino-acid chain; its full sequence is Glycerol-3-phosphate acyltransferase 1 (585 aa).

Helical transmembrane passes span 126-146 (FFPYFMLVAFEGGSIIRAILL), 334-354 (TPLATLAMFIWLPIGFLLAVF), and 356-376 (ISVGVFLPYHVANFLASMSGV). The HXXXXD motif signature appears at 403–408 (HRTLLD).

The protein belongs to the GPAT/DAPAT family. As to expression, highly expressed in developing siliques and flower buds. Weakly or not expressed in roots, seedlings and leaves.

The protein localises to the membrane. The protein resides in the mitochondrion. The catalysed reaction is sn-glycerol 3-phosphate + an acyl-CoA = a 1-acyl-sn-glycero-3-phosphate + CoA. It functions in the pathway phospholipid metabolism; CDP-diacylglycerol biosynthesis; CDP-diacylglycerol from sn-glycerol 3-phosphate: step 1/3. Esterifies acyl-group from acyl-ACP to the sn-1 position of glycerol-3-phosphate, an essential step in glycerolipid biosynthesis. Involved in pollen development, by being required for tapetum differentiation and male fertility. In addition to the sporophytic effect, it also exerts a gametophytic effect on pollen performance. The sequence is that of Glycerol-3-phosphate acyltransferase 1 (GPAT1) from Arabidopsis thaliana (Mouse-ear cress).